Here is a 206-residue protein sequence, read N- to C-terminus: ATP phosphoribosyltransferase (206 aa).

Belongs to the ATP phosphoribosyltransferase family. Short subfamily. As to quaternary structure, heteromultimer composed of HisG and HisZ subunits.

It localises to the cytoplasm. The enzyme catalyses 1-(5-phospho-beta-D-ribosyl)-ATP + diphosphate = 5-phospho-alpha-D-ribose 1-diphosphate + ATP. It participates in amino-acid biosynthesis; L-histidine biosynthesis; L-histidine from 5-phospho-alpha-D-ribose 1-diphosphate: step 1/9. Functionally, catalyzes the condensation of ATP and 5-phosphoribose 1-diphosphate to form N'-(5'-phosphoribosyl)-ATP (PR-ATP). Has a crucial role in the pathway because the rate of histidine biosynthesis seems to be controlled primarily by regulation of HisG enzymatic activity. This Thermus thermophilus (strain ATCC 27634 / DSM 579 / HB8) protein is ATP phosphoribosyltransferase.